A 134-amino-acid chain; its full sequence is Profilin-2 (134 aa).

A disulfide bond links Cys13 and Cys118. Residues 84-100 (AVIRGKKGSGGITIKKT) carry the Involved in PIP2 interaction motif. Thr114 is modified (phosphothreonine).

It belongs to the profilin family. Occurs in many kinds of cells as a complex with monomeric actin in a 1:1 ratio. In terms of processing, phosphorylated by MAP kinases.

It is found in the cytoplasm. The protein resides in the cytoskeleton. Binds to actin and affects the structure of the cytoskeleton. At high concentrations, profilin prevents the polymerization of actin, whereas it enhances it at low concentrations. The protein is Profilin-2 of Olea europaea (Common olive).